A 175-amino-acid polypeptide reads, in one-letter code: Adenine phosphoribosyltransferase (175 aa).

Belongs to the purine/pyrimidine phosphoribosyltransferase family. As to quaternary structure, homodimer.

It localises to the cytoplasm. It catalyses the reaction AMP + diphosphate = 5-phospho-alpha-D-ribose 1-diphosphate + adenine. It functions in the pathway purine metabolism; AMP biosynthesis via salvage pathway; AMP from adenine: step 1/1. In terms of biological role, catalyzes a salvage reaction resulting in the formation of AMP, that is energically less costly than de novo synthesis. This chain is Adenine phosphoribosyltransferase, found in Pelagibacter ubique (strain HTCC1062).